Reading from the N-terminus, the 481-residue chain is UDP-N-acetylmuramate--L-alanine ligase (481 aa).

Residue 135–141 (GTHGKTT) coordinates ATP.

The protein belongs to the MurCDEF family.

It is found in the cytoplasm. The catalysed reaction is UDP-N-acetyl-alpha-D-muramate + L-alanine + ATP = UDP-N-acetyl-alpha-D-muramoyl-L-alanine + ADP + phosphate + H(+). Its pathway is cell wall biogenesis; peptidoglycan biosynthesis. In terms of biological role, cell wall formation. The protein is UDP-N-acetylmuramate--L-alanine ligase of Nostoc punctiforme (strain ATCC 29133 / PCC 73102).